Consider the following 319-residue polypeptide: Methionyl-tRNA formyltransferase (319 aa).

Residue 113–116 participates in (6S)-5,6,7,8-tetrahydrofolate binding; that stretch reads SLLP.

The protein belongs to the Fmt family.

The enzyme catalyses L-methionyl-tRNA(fMet) + (6R)-10-formyltetrahydrofolate = N-formyl-L-methionyl-tRNA(fMet) + (6S)-5,6,7,8-tetrahydrofolate + H(+). In terms of biological role, attaches a formyl group to the free amino group of methionyl-tRNA(fMet). The formyl group appears to play a dual role in the initiator identity of N-formylmethionyl-tRNA by promoting its recognition by IF2 and preventing the misappropriation of this tRNA by the elongation apparatus. This Hamiltonella defensa subsp. Acyrthosiphon pisum (strain 5AT) protein is Methionyl-tRNA formyltransferase.